A 432-amino-acid polypeptide reads, in one-letter code: GTPase HflX (432 aa).

The Hflx-type G domain occupies 202 to 367 (FTVALVGYTN…ELRRAVGRAM (166 aa)). GTP-binding positions include 208 to 215 (GYTNAGKS), 233 to 237 (FATLD), 255 to 258 (DTVG), 321 to 324 (NKID), and 345 to 347 (SAQ). 2 residues coordinate Mg(2+): Ser215 and Thr235.

It belongs to the TRAFAC class OBG-HflX-like GTPase superfamily. HflX GTPase family. In terms of assembly, monomer. Associates with the 50S ribosomal subunit. Mg(2+) serves as cofactor.

The protein localises to the cytoplasm. In terms of biological role, GTPase that associates with the 50S ribosomal subunit and may have a role during protein synthesis or ribosome biogenesis. This Magnetococcus marinus (strain ATCC BAA-1437 / JCM 17883 / MC-1) protein is GTPase HflX.